A 438-amino-acid polypeptide reads, in one-letter code: MNLKKTENALSLTLKNFIKSESFGGIFLFLNAVLAMVVANSFLKESYFALWHTPFGFQIGDFFIGFSLHNWIDDVLMALFFLMIGLEIKRELLFGELSSFKKASFPVIAAIGGMIAPGLIYFFLNANTPSQHGFGIPMATDIAFALGVIMLLGKRVPTALKVFLITLAVADDLGAIVVIALFYTTNLKFAWLLGALGVVLVLAVLNRLNMRSLIPYLLLGVLLWFCVHQSGIHATIAAVILAFMIPVKIPKDSKNVELLELGKRYAETSSGALLSKEQQEILHSIEEKASALQSPLERLEHFLAPISGYFIMPLFAFANAGVSVDSSINLEVDKVLLGVILGLCLGKPLGIFLITFISEKLKITARPKGISWWHILGAGLLAGIGFTMSMFISNLAFTSEHKDAMEVAKIAILLGSLISGIIGALYLFALDKRAALKK.

11 consecutive transmembrane segments (helical) span residues 23-43 (FGGI…NSFL), 62-82 (FFIG…LFFL), 104-124 (SFPV…YFFL), 133-153 (GFGI…MLLG), 162-182 (VFLI…IALF), 185-205 (TNLK…LAVL), 221-241 (VLLW…AVIL), 302-322 (FLAP…NAGV), 337-357 (LGVI…ITFI), 372-392 (WWHI…SMFI), and 410-430 (IAIL…LFAL).

This sequence belongs to the NhaA Na(+)/H(+) (TC 2.A.33) antiporter family.

The protein resides in the cell inner membrane. It catalyses the reaction Na(+)(in) + 2 H(+)(out) = Na(+)(out) + 2 H(+)(in). Na(+)/H(+) antiporter that extrudes sodium in exchange for external protons. The chain is Na(+)/H(+) antiporter NhaA from Helicobacter pylori (strain ATCC 700392 / 26695) (Campylobacter pylori).